We begin with the raw amino-acid sequence, 562 residues long: NAD-dependent malic enzyme 1 (562 aa).

Catalysis depends on tyrosine 101, which acts as the Proton donor. Arginine 154 serves as a coordination point for NAD(+). Catalysis depends on lysine 172, which acts as the Proton acceptor. A divalent metal cation contacts are provided by glutamate 243, aspartate 244, and aspartate 267. Residues aspartate 267 and asparagine 415 each contribute to the NAD(+) site.

Belongs to the malic enzymes family. In terms of assembly, homotetramer. Mg(2+) serves as cofactor. It depends on Mn(2+) as a cofactor.

The catalysed reaction is (S)-malate + NAD(+) = pyruvate + CO2 + NADH. It catalyses the reaction oxaloacetate + H(+) = pyruvate + CO2. This Vibrio vulnificus (strain YJ016) protein is NAD-dependent malic enzyme 1.